Reading from the N-terminus, the 136-residue chain is Nuclear receptor 2C2-associated protein (136 aa).

The protein belongs to the NR2C2AP family.

The protein localises to the nucleus. Functionally, may act as a repressor of nr2c2-mediated transactivation by suppressing the binding between nr2c2 and its response element in target genes. This Xenopus laevis (African clawed frog) protein is Nuclear receptor 2C2-associated protein (nr2c2ap).